The following is a 163-amino-acid chain: Nucleotide-binding protein C8J_0350 (163 aa).

This sequence belongs to the YajQ family.

Functionally, nucleotide-binding protein. This is Nucleotide-binding protein C8J_0350 from Campylobacter jejuni subsp. jejuni serotype O:6 (strain 81116 / NCTC 11828).